The following is a 319-amino-acid chain: MMVFRVEELVTGKKNSNGSSGEFLPGEFRNGEYEAAVALEKQEDLKTLPANSVNLGEEQRKSEKVREAELKKKKLEQRSKLENLEDLEIIVQLKKRKKYKKTKVPVVKEPEPEIITEPVDVPRFLKAALENKLPVVEKFLSDKNSPDVCDEYKRTALHRACLEGHLAIVEKLMEAGAQIEFRDMLESTAIHWACRGGNLDVLKLLLNKGAKISARDKLLSTALHVAVRTGHYECAEHLIACEADLNAKDREGDTPLHDAVRLNRYKMIRLLMTFGADLNVKNCAGKTPMDLVLHWQNGTKAIFDSLKENAYKNSRIATF.

Residues 55-89 are a coiled coil; that stretch reads LGEEQRKSEKVREAELKKKKLEQRSKLENLEDLEI. ANK repeat units lie at residues 152-181, 185-214, 218-247, 251-280, and 284-315; these read YKRT…QIEF, LEST…KISA, LLST…DLNA, EGDT…DLNV, and AGKT…KNSR.

Interacts with TTN/titin. Interacts with YBX1. In terms of tissue distribution, expressed in heart, cardiac muscle.

The protein resides in the nucleus. Its function is as follows. May play an important role in endothelial cell activation. May act as a nuclear transcription factor that negatively regulates the expression of cardiac genes. This Rattus norvegicus (Rat) protein is Ankyrin repeat domain-containing protein 1 (Ankrd1).